The chain runs to 168 residues: Putative F-box protein At1g30945 (168 aa).

One can recognise an F-box domain in the interval 5 to 52 (KTFDSISNDLFLEILLRLSTKSIDRSRCVSKQWASILCSQDFTESEKF).

This chain is Putative F-box protein At1g30945, found in Arabidopsis thaliana (Mouse-ear cress).